The primary structure comprises 510 residues: Inositol-3-phosphate synthase isozyme 2 (510 aa).

It belongs to the myo-inositol 1-phosphate synthase family. NAD(+) is required as a cofactor. As to expression, expressed in siliques, leaves, roots, seed endosperm, but not in embryos. Highest expression in seeds. In leaves, only expressed in hydathodes and vascular tissue.

The protein resides in the cytoplasm. The catalysed reaction is D-glucose 6-phosphate = 1D-myo-inositol 3-phosphate. It participates in polyol metabolism; myo-inositol biosynthesis; myo-inositol from D-glucose 6-phosphate: step 1/2. Functionally, key enzyme in myo-inositol biosynthesis pathway that catalyzes the conversion of glucose 6-phosphate to 1-myo-inositol 1-phosphate in a NAD-dependent manner. In Arabidopsis thaliana (Mouse-ear cress), this protein is Inositol-3-phosphate synthase isozyme 2 (IPS2).